The primary structure comprises 410 residues: Arginine biosynthesis bifunctional protein ArgJ (410 aa).

Positions 160, 186, 197, 283, 405, and 410 each coordinate substrate. The active-site Nucleophile is Thr197.

This sequence belongs to the ArgJ family. As to quaternary structure, heterotetramer of two alpha and two beta chains.

The protein resides in the cytoplasm. It catalyses the reaction N(2)-acetyl-L-ornithine + L-glutamate = N-acetyl-L-glutamate + L-ornithine. The catalysed reaction is L-glutamate + acetyl-CoA = N-acetyl-L-glutamate + CoA + H(+). It functions in the pathway amino-acid biosynthesis; L-arginine biosynthesis; L-ornithine and N-acetyl-L-glutamate from L-glutamate and N(2)-acetyl-L-ornithine (cyclic): step 1/1. It participates in amino-acid biosynthesis; L-arginine biosynthesis; N(2)-acetyl-L-ornithine from L-glutamate: step 1/4. Competitively inhibited by L-ornithine. In terms of biological role, catalyzes two activities which are involved in the cyclic version of arginine biosynthesis: the synthesis of N-acetylglutamate from glutamate and acetyl-CoA as the acetyl donor, and of ornithine by transacetylation between N(2)-acetylornithine and glutamate. This Geobacillus stearothermophilus (Bacillus stearothermophilus) protein is Arginine biosynthesis bifunctional protein ArgJ.